The sequence spans 264 residues: Acyl-[acyl-carrier-protein]--UDP-N-acetylglucosamine O-acyltransferase (264 aa).

This sequence belongs to the transferase hexapeptide repeat family. LpxA subfamily. In terms of assembly, homotrimer.

It is found in the cytoplasm. The catalysed reaction is a (3R)-hydroxyacyl-[ACP] + UDP-N-acetyl-alpha-D-glucosamine = a UDP-3-O-[(3R)-3-hydroxyacyl]-N-acetyl-alpha-D-glucosamine + holo-[ACP]. Its pathway is glycolipid biosynthesis; lipid IV(A) biosynthesis; lipid IV(A) from (3R)-3-hydroxytetradecanoyl-[acyl-carrier-protein] and UDP-N-acetyl-alpha-D-glucosamine: step 1/6. In terms of biological role, involved in the biosynthesis of lipid A, a phosphorylated glycolipid that anchors the lipopolysaccharide to the outer membrane of the cell. The protein is Acyl-[acyl-carrier-protein]--UDP-N-acetylglucosamine O-acyltransferase of Rickettsia rickettsii.